Here is a 137-residue protein sequence, read N- to C-terminus: Fibroblast growth factor 2 (137 aa).

Heparin is bound at residue asparagine 27. Tyrosine 73 carries the phosphotyrosine; by TEC modification. Lysine 86 is covalently cross-linked (Glycyl lysine isopeptide (Lys-Gly) (interchain with G-Cter in SUMO1)). The heparin-binding stretch occupies residues lysine 119–lysine 135.

It belongs to the heparin-binding growth factors family. As to quaternary structure, monomer. Homodimer. Interacts with FGFR1, FGFR2, FGFR3 and FGFR4. Affinity between fibroblast growth factors (FGFs) and their receptors is increased by heparan sulfate glycosaminoglycans that function as coreceptors. Interacts with CSPG4, FGFBP1 and TEC. Found in a complex with FGFBP1, FGF1 and FGF2. Interacts with FGFBP3. Interacts with integrin ITGAV:ITGB3; the interaction is required for FGF2 signaling. Interacts with SNORC (via the extracellular domain). Interacts with glypican GPC3. Phosphorylation at Tyr-73 regulates FGF2 unconventional secretion.

The protein localises to the secreted. Its subcellular location is the nucleus. Functionally, acts as a ligand for FGFR1, FGFR2, FGFR3 and FGFR4. Also acts as an integrin ligand which is required for FGF2 signaling. Binds to integrin ITGAV:ITGB3. Plays an important role in the regulation of cell survival, cell division, cell differentiation and cell migration. Functions as a potent mitogen in vitro. Can induce angiogenesis. Mediates phosphorylation of ERK1/2 and thereby promotes retinal lens fiber differentiation. This Oryctolagus cuniculus (Rabbit) protein is Fibroblast growth factor 2 (FGF2).